We begin with the raw amino-acid sequence, 1188 residues long: uncharacterized protein (1188 aa).

Disordered stretches follow at residues 126-468, 484-771, 790-823, and 847-1039; these read GDLR…SQME, EDRF…LYKP, ARGG…TDEL, and QRAQ…FSRF. 3 stretches are compositionally biased toward pro residues: residues 139–151, 159–193, and 208–240; these read IPPP…PGPP, GGSP…PPPV, and IPTP…PAPA. Ser260 carries the post-translational modification Phosphoserine. A compositionally biased stretch (basic and acidic residues) spans 322 to 331; that stretch reads EAPRKEEGAT. A compositionally biased stretch (pro residues) spans 389–418; sequence TPPPAPPLPPPAPPLPPPAPPLPPAAPPLP. Positions 432–441 are enriched in low complexity; it reads KTPKSSSPAL. Composition is skewed to basic and acidic residues over residues 501-514 and 566-583; these read KEGK…EKET and IRNE…KEAK. Residues 618–633 show a composition bias toward low complexity; it reads LPPQSTTLLPTTSLQP. The span at 640-652 shows a compositional bias: pro residues; that stretch reads AIPPKATPEPAIP. At Thr666 the chain carries Phosphothreonine. Residues 689–703 are compositionally biased toward low complexity; the sequence is PAIASTATTLPTTTS. A compositionally biased stretch (polar residues) spans 875 to 893; the sequence is AEASSDSIFHSQGTPNSFT. The span at 920-931 shows a compositional bias: basic and acidic residues; sequence LGRDAEGTELSR. A compositionally biased stretch (pro residues) spans 986-1001; the sequence is IPPPPEFSNDPEPPAP. A compositionally biased stretch (polar residues) spans 1007–1019; sequence GRQSSPPRNNYSD. Residues 1026–1035 are compositionally biased toward low complexity; the sequence is AGPGAPPALG. Arg1044 is modified (asymmetric dimethylarginine). Positions 1069-1160 are disordered; the sequence is GEPHRGPGLP…SPYTTTRYGS (92 aa). Omega-N-methylarginine is present on residues Arg1073 and Arg1084. Arg1157 is subject to Asymmetric dimethylarginine.

This is an uncharacterized protein from Homo sapiens (Human).